The following is a 70-amino-acid chain: Large ribosomal subunit protein bL31 (70 aa).

Cys-16, Cys-18, Cys-37, and Cys-40 together coordinate Zn(2+).

It belongs to the bacterial ribosomal protein bL31 family. Type A subfamily. Part of the 50S ribosomal subunit. Zn(2+) serves as cofactor.

Functionally, binds the 23S rRNA. The protein is Large ribosomal subunit protein bL31 of Pasteurella multocida (strain Pm70).